The chain runs to 166 residues: Small ribosomal subunit protein eS10 (166 aa).

The interval 95 to 166 is disordered; sequence RRQTRPETAR…FGRGRGQQPQ (72 aa). A compositionally biased stretch (basic and acidic residues) spans 98–129; that stretch reads TRPETARPRPKGLEGERPARLARGEGDRDAYR. Over residues 143–154 the composition is skewed to low complexity; sequence AGAGAATEFQFR. Gly residues predominate over residues 155–166; the sequence is GGFGRGRGQQPQ.

This sequence belongs to the eukaryotic ribosomal protein eS10 family. As to quaternary structure, component of the small ribosomal subunit.

The protein resides in the cytoplasm. It is found in the nucleus. Its subcellular location is the nucleolus. Its function is as follows. Component of the 40S ribosomal subunit. The ribosome is a large ribonucleoprotein complex responsible for the synthesis of proteins in the cell. The chain is Small ribosomal subunit protein eS10 (rps10) from Ictalurus punctatus (Channel catfish).